A 248-amino-acid chain; its full sequence is Pulmonary surfactant-associated protein A (248 aa).

A signal peptide spans 1 to 20 (MLLCSLTLTLLWMVASGLEC). In terms of domain architecture, Collagen-like spans 28-100 (GSPGIPGTPG…PGERGPPGFP (73 aa)). Residues 29 to 102 (SPGIPGTPGS…ERGPPGFPAY (74 aa)) form a disordered region. Residues proline 30, proline 33, proline 36, proline 42, proline 54, proline 57, proline 63, proline 67, and proline 70 each carry the 4-hydroxyproline modification. The segment covering 42 to 51 (PGRDGRDGIK) has biased composition (basic and acidic residues). A compositionally biased stretch (pro residues) spans 54–65 (PGPPGPMGPPGG). Over residues 69–82 (LPGRDGMTGAPGLP) the composition is skewed to low complexity. The span at 84 to 93 (ERGEKGEPGE) shows a compositional bias: basic and acidic residues. A C-type lectin domain is found at 132-248 (LAVGEKVFST…LQYRLAICEF (117 aa)). Cystine bridges form between cysteine 155–cysteine 246 and cysteine 224–cysteine 238. Asparagine 207 carries N-linked (GlcNAc...) asparagine glycosylation. Ca(2+) contacts are provided by glutamate 215, arginine 217, asparagine 234, and aspartate 235.

This sequence belongs to the SFTPA family. As to quaternary structure, oligomeric complex of 6 set of homotrimers.

It is found in the secreted. It localises to the extracellular space. The protein localises to the extracellular matrix. Its subcellular location is the surface film. Its function is as follows. In presence of calcium ions, it binds to surfactant phospholipids and contributes to lower the surface tension at the air-liquid interface in the alveoli of the mammalian lung and is essential for normal respiration. Enhances the expression of MYO18A/SP-R210 on alveolar macrophages. This Bos taurus (Bovine) protein is Pulmonary surfactant-associated protein A (SFTPA1).